The following is a 427-amino-acid chain: 3-phosphoshikimate 1-carboxyvinyltransferase (427 aa).

3 residues coordinate 3-phosphoshikimate: Lys20, Ser21, and Arg25. Residue Lys20 participates in phosphoenolpyruvate binding. Residues Gly92 and Arg120 each contribute to the phosphoenolpyruvate site. Residues Ser166, Gln168, Asp312, and Lys339 each contribute to the 3-phosphoshikimate site. Gln168 is a phosphoenolpyruvate binding site. Asp312 functions as the Proton acceptor in the catalytic mechanism. Residues Arg343 and Arg385 each contribute to the phosphoenolpyruvate site.

It belongs to the EPSP synthase family. As to quaternary structure, monomer.

Its subcellular location is the cytoplasm. The catalysed reaction is 3-phosphoshikimate + phosphoenolpyruvate = 5-O-(1-carboxyvinyl)-3-phosphoshikimate + phosphate. The protein operates within metabolic intermediate biosynthesis; chorismate biosynthesis; chorismate from D-erythrose 4-phosphate and phosphoenolpyruvate: step 6/7. Its function is as follows. Catalyzes the transfer of the enolpyruvyl moiety of phosphoenolpyruvate (PEP) to the 5-hydroxyl of shikimate-3-phosphate (S3P) to produce enolpyruvyl shikimate-3-phosphate and inorganic phosphate. The protein is 3-phosphoshikimate 1-carboxyvinyltransferase of Streptococcus uberis (strain ATCC BAA-854 / 0140J).